Reading from the N-terminus, the 540-residue chain is Signal peptide peptidase-like 2 (540 aa).

The first 27 residues, 1–27, serve as a signal peptide directing secretion; the sequence is MDSLRFLRILLLSSSILLLSLRSTVTA. Residues 28-196 lie on the Lumenal side of the membrane; the sequence is GDIVHQDNLA…PRRPAVDVAE (169 aa). Asn-83 is a glycosylation site (N-linked (GlcNAc...) asparagine). In terms of domain architecture, PA spans 95–173; that stretch reads SCTPLKNKLS…QDAGASLQKM (79 aa). A glycan (N-linked (GlcNAc...) asparagine) is linked at Asn-176. A helical transmembrane segment spans residues 197–217; that stretch reads VFLWLMAIGTILCASYWSAWS. At 218–248 the chain is on the cytoplasmic side; sequence AREAAIEHDKLLKDAIDEIPNTNDGGSGVVE. A helical membrane pass occupies residues 249-269; it reads INSISAIFFVVLASGFLVILY. Residues 270–278 lie on the Lumenal side of the membrane; that stretch reads KLMSYWFVE. The chain crosses the membrane as a helical span at residues 279–299; that stretch reads LLVVVFCIGGVEGLQTCLVAL. Residues 300 to 319 are Cytoplasmic-facing; it reads LSRWFQRAADTYVKVPFLGP. A helical membrane pass occupies residues 320-340; it reads ISYLTLAVSPFCIVFAVLWAV. Residues 341-345 are Lumenal-facing; sequence YRVHS. The chain crosses the membrane as a helical span at residues 346 to 366; the sequence is FAWIGQDVLGIALIITVLQIV. Over 367-370 the chain is Cytoplasmic; sequence HVPN. Residues 371 to 391 form a helical membrane-spanning segment; sequence LKVGTVLLSCAFLYDIFWVFV. Residue Asp-385 is part of the active site. Residues 392–429 lie on the Lumenal side of the membrane; sequence SKKLFHESVMIVVARGDKSGEDGIPMLLKIPRMFDPWG. Residues 430–450 form a helical membrane-spanning segment; it reads GYSIIGFGDILLPGLLIAFAL. Asp-438 is a catalytic residue. Residues 451 to 462 lie on the Cytoplasmic side of the membrane; that stretch reads RYDWLANKTLRT. A helical membrane pass occupies residues 463–483; that stretch reads GYFIWAMVAYGLGLLITYVAL. Topologically, residues 484 to 488 are lumenal; the sequence is NLMDG. A helical membrane pass occupies residues 489–509; that stretch reads HGQPALLYIVPFTLGTMLTLA. A PAL motif is present at residues 492–494; sequence PAL. The Cytoplasmic portion of the chain corresponds to 510 to 540; the sequence is RKRDDLWILWTKGEPERACPHHVRLEQCSEK.

Belongs to the peptidase A22B family. Post-translationally, glycosylated. As to expression, ubiquitous.

It localises to the endosome membrane. Intramembrane-cleaving aspartic protease (I-CLiP) that cleaves type II membrane signal peptides in the hydrophobic plane of the membrane. This is Signal peptide peptidase-like 2 (SPPL2) from Arabidopsis thaliana (Mouse-ear cress).